The following is a 366-amino-acid chain: tRNA/tmRNA (uracil-C(5))-methyltransferase (366 aa).

Residues glutamine 190, tyrosine 218, asparagine 223, glutamate 239, and aspartate 299 each coordinate S-adenosyl-L-methionine. Cysteine 324 serves as the catalytic Nucleophile. Glutamate 358 functions as the Proton acceptor in the catalytic mechanism.

The protein belongs to the class I-like SAM-binding methyltransferase superfamily. RNA M5U methyltransferase family. TrmA subfamily.

The catalysed reaction is uridine(54) in tRNA + S-adenosyl-L-methionine = 5-methyluridine(54) in tRNA + S-adenosyl-L-homocysteine + H(+). It catalyses the reaction uridine(341) in tmRNA + S-adenosyl-L-methionine = 5-methyluridine(341) in tmRNA + S-adenosyl-L-homocysteine + H(+). Its function is as follows. Dual-specificity methyltransferase that catalyzes the formation of 5-methyluridine at position 54 (m5U54) in all tRNAs, and that of position 341 (m5U341) in tmRNA (transfer-mRNA). In Escherichia coli O157:H7 (strain EC4115 / EHEC), this protein is tRNA/tmRNA (uracil-C(5))-methyltransferase.